Here is a 237-residue protein sequence, read N- to C-terminus: Insulin-like growth factor-binding protein 6 (237 aa).

The first 25 residues, 1–25 (MTPHRLLPPLLLTLLLAARPGGALA), serve as a signal peptide directing secretion. Residues 26 to 105 (RCPGCGQGVS…LQGRGRCGRA (80 aa)) enclose the IGFBP N-terminal domain. Cystine bridges form between cysteine 27-cysteine 30, cysteine 38-cysteine 42, cysteine 55-cysteine 61, cysteine 69-cysteine 82, and cysteine 76-cysteine 102. A disordered region spans residues 101 to 158 (RCGRARTPSGENPKESKPQAGTARSQDVNRRDQQRNSGTSTTPSRSNSGGVQDTEMGP). The segment covering 135–151 (RNSGTSTTPSRSNSGGV) has biased composition (polar residues). Residues 156-231 (MGPCRKHLDS…SEGGDGSSLC (76 aa)) form the Thyroglobulin type-1 domain. Cystine bridges form between cysteine 159-cysteine 186, cysteine 197-cysteine 208, and cysteine 210-cysteine 231. Positions 215–237 (GQPLPGSSEGGDGSSLCPTGSSG) are disordered.

Interacts (via C-terminal domain) with PHB2. Post-translationally, O-glycosylated.

It localises to the secreted. IGF-binding proteins prolong the half-life of the IGFs and have been shown to either inhibit or stimulate the growth promoting effects of the IGFs on cell culture. They alter the interaction of IGFs with their cell surface receptors. Activates the MAPK signaling pathway and induces cell migration. This Bos taurus (Bovine) protein is Insulin-like growth factor-binding protein 6 (IGFBP6).